Consider the following 345-residue polypeptide: Diacylglycerol O-acyltransferase 1 (345 aa).

The Cytoplasmic segment spans residues 1–49 (MSEETSIPGIIASTPPISKDSRRNVSHWLQALAVFLHSVSLTLTASWYT). The chain crosses the membrane as a helical span at residues 50-70 (VLWAFLPFWPFLIVYLIWLIY). At 71 to 113 (DDGFVTGKDRQKRWLRNAPPYRWFCHYFPIRLHKTTELDSEKN) the chain is on the lumenal side. A helical transmembrane segment spans residues 114–134 (YIFGYHPHGIISLGAFGGFAS). The Cytoplasmic segment spans residues 135–141 (EGADFSK). A helical transmembrane segment spans residues 142–162 (LFPGINVSVLTLNSNFYVPVY). Residues 163-216 (RDYLMALNINSVSKKSCVSILSRKPGDSVLIVIGGAQESLLSRPGQNNLVLKKR) are Lumenal-facing. A helical membrane pass occupies residues 217 to 237 (FGFVKLAFLTGSSLVPCFAFG). Residues 238 to 345 (ESDIFEQVDN…NRISELKLSA (108 aa)) are Cytoplasmic-facing.

It belongs to the diacylglycerol acyltransferase family.

It localises to the lipid droplet. The protein localises to the endoplasmic reticulum membrane. It catalyses the reaction an acyl-CoA + a 1,2-diacyl-sn-glycerol = a triacyl-sn-glycerol + CoA. It carries out the reaction a 2-acylglycerol + an acyl-CoA = a 1,2-diacyl-sn-glycerol + CoA. It participates in glycerolipid metabolism; triacylglycerol biosynthesis. Its function is as follows. Catalyzes the terminal and only committed step in triacylglycerol (TAG) synthesis by using diacylglycerol (DAG) and fatty acyl-CoA as substrates. Required for storage lipid synthesis. Major DAG esterifying enzyme in stationary phase when TAG production is particularly active. Involved in lipid particle synthesis from the endoplasmic reticulum, promoting localized TAG production at discrete ER subdomains. This is Diacylglycerol O-acyltransferase 1 (dga1) from Schizosaccharomyces pombe (strain 972 / ATCC 24843) (Fission yeast).